A 343-amino-acid polypeptide reads, in one-letter code: Anthranilate phosphoribosyltransferase (343 aa).

5-phospho-alpha-D-ribose 1-diphosphate-binding positions include G84, G87–D88, T92, N94–T97, K112–S120, and S124. G84 contacts anthranilate. S96 provides a ligand contact to Mg(2+). Anthranilate is bound at residue N115. R170 serves as a coordination point for anthranilate. Mg(2+) is bound by residues D229 and E230.

It belongs to the anthranilate phosphoribosyltransferase family. In terms of assembly, homodimer. Requires Mg(2+) as cofactor.

It catalyses the reaction N-(5-phospho-beta-D-ribosyl)anthranilate + diphosphate = 5-phospho-alpha-D-ribose 1-diphosphate + anthranilate. The protein operates within amino-acid biosynthesis; L-tryptophan biosynthesis; L-tryptophan from chorismate: step 2/5. Functionally, catalyzes the transfer of the phosphoribosyl group of 5-phosphorylribose-1-pyrophosphate (PRPP) to anthranilate to yield N-(5'-phosphoribosyl)-anthranilate (PRA). The sequence is that of Anthranilate phosphoribosyltransferase from Stenotrophomonas maltophilia (strain R551-3).